A 245-amino-acid chain; its full sequence is MLLIPAIDLKEGRCVRLKQGLMEEATVFSDSPADTALHWFEQGARRLHLVDLNGAFAGVPQNLPAIKDILAAVAKDIPVQLGGGMRDLKTIGQYLDLGLNDVIIGTAAVKNPDLVREACKAFPGRIIVGLDAKDGMAAIDGWATVTGHHVIDLAKRFEDDGVNSIIYTDIGRDGMMSGVNIDATVKLAQSVRIPVIASGGLTGLDDIRALCAAEKHGVAGAITGRAIYEGSIDFAQAQQLADSLD.

Aspartate 8 (proton acceptor) is an active-site residue. The Proton donor role is filled by aspartate 131.

The protein belongs to the HisA/HisF family.

The protein localises to the cytoplasm. The catalysed reaction is 1-(5-phospho-beta-D-ribosyl)-5-[(5-phospho-beta-D-ribosylamino)methylideneamino]imidazole-4-carboxamide = 5-[(5-phospho-1-deoxy-D-ribulos-1-ylimino)methylamino]-1-(5-phospho-beta-D-ribosyl)imidazole-4-carboxamide. The protein operates within amino-acid biosynthesis; L-histidine biosynthesis; L-histidine from 5-phospho-alpha-D-ribose 1-diphosphate: step 4/9. The polypeptide is 1-(5-phosphoribosyl)-5-[(5-phosphoribosylamino)methylideneamino] imidazole-4-carboxamide isomerase (Neisseria gonorrhoeae (strain ATCC 700825 / FA 1090)).